Here is a 91-residue protein sequence, read N- to C-terminus: Acylphosphatase (91 aa).

The Acylphosphatase-like domain occupies T3 to Y91. Catalysis depends on residues R18 and N36.

It belongs to the acylphosphatase family.

It catalyses the reaction an acyl phosphate + H2O = a carboxylate + phosphate + H(+). This is Acylphosphatase (acyP) from Lactobacillus johnsonii (strain CNCM I-12250 / La1 / NCC 533).